The following is a 134-amino-acid chain: Protein Turandot E (134 aa).

An N-terminal signal peptide occupies residues 1-38 (MSYTRTVHSSTSILKMNSALQISCLLVVLGCLLGSGHC).

This sequence belongs to the Turandot family.

Its subcellular location is the secreted. A humoral factor that may play a role in stress tolerance. The polypeptide is Protein Turandot E (Drosophila simulans (Fruit fly)).